Here is a 369-residue protein sequence, read N- to C-terminus: DNA replication and repair protein RecF (369 aa).

30-37 (GQNAQGKT) provides a ligand contact to ATP.

The protein belongs to the RecF family.

Its subcellular location is the cytoplasm. Its function is as follows. The RecF protein is involved in DNA metabolism; it is required for DNA replication and normal SOS inducibility. RecF binds preferentially to single-stranded, linear DNA. It also seems to bind ATP. The chain is DNA replication and repair protein RecF from Acetivibrio thermocellus (strain ATCC 27405 / DSM 1237 / JCM 9322 / NBRC 103400 / NCIMB 10682 / NRRL B-4536 / VPI 7372) (Clostridium thermocellum).